Reading from the N-terminus, the 377-residue chain is Pyruvate dehydrogenase E1 component subunit alpha, mitochondrial (377 aa).

Residues 1 to 26 constitute a mitochondrion transit peptide; it reads MLSNFLKVNSKALGHIRTFASKSGEI. His-83, Tyr-109, Arg-110, Gly-156, Val-158, Asp-187, Gly-188, Ala-189, Asn-216, and Tyr-218 together coordinate pyruvate. Thiamine diphosphate contacts are provided by Tyr-109, Arg-110, Gly-156, Val-158, Asp-187, Gly-188, Ala-189, and Asn-216. Asp-187 contributes to the Mg(2+) binding site. Mg(2+) contacts are provided by Asn-216 and Tyr-218. Position 283 (His-283) interacts with thiamine diphosphate.

In terms of assembly, tetramer of 2 alpha and 2 beta subunits. The cofactor is thiamine diphosphate. Mg(2+) serves as cofactor.

It is found in the mitochondrion matrix. The catalysed reaction is N(6)-[(R)-lipoyl]-L-lysyl-[protein] + pyruvate + H(+) = N(6)-[(R)-S(8)-acetyldihydrolipoyl]-L-lysyl-[protein] + CO2. With respect to regulation, E1 activity is regulated by phosphorylation (inactivation) and dephosphorylation (activation) of the alpha subunit. In terms of biological role, the pyruvate dehydrogenase complex catalyzes the overall conversion of pyruvate to acetyl-CoA and CO(2). It contains multiple copies of three enzymatic components: pyruvate dehydrogenase (E1), dihydrolipoamide acetyltransferase (E2) and lipoamide dehydrogenase (E3). The protein is Pyruvate dehydrogenase E1 component subunit alpha, mitochondrial (pdhA) of Dictyostelium discoideum (Social amoeba).